The following is a 325-amino-acid chain: Putative gluconeogenesis factor (325 aa).

It belongs to the gluconeogenesis factor family.

Its subcellular location is the cytoplasm. Its function is as follows. Required for morphogenesis under gluconeogenic growth conditions. This is Putative gluconeogenesis factor from Streptococcus pyogenes serotype M1.